Reading from the N-terminus, the 321-residue chain is Lambda-crystallin homolog (321 aa).

Phosphoserine is present on Ser6. NAD(+) is bound by residues 19-20, Asp39, Glu100, and Lys105; that span reads LI.

Belongs to the 3-hydroxyacyl-CoA dehydrogenase family. Homodimer.

It is found in the cytoplasm. It carries out the reaction L-gulonate + NAD(+) = 3-dehydro-L-gulonate + NADH + H(+). With respect to regulation, inhibited by malonate. Its function is as follows. Has high L-gulonate 3-dehydrogenase activity. It also exhibits low dehydrogenase activity toward L-3-hydroxybutyrate (HBA) and L-threonate. This Bos taurus (Bovine) protein is Lambda-crystallin homolog (CRYL1).